The primary structure comprises 252 residues: 5-oxoprolinase subunit A (252 aa).

Belongs to the LamB/PxpA family. In terms of assembly, forms a complex composed of PxpA, PxpB and PxpC.

The enzyme catalyses 5-oxo-L-proline + ATP + 2 H2O = L-glutamate + ADP + phosphate + H(+). Its function is as follows. Catalyzes the cleavage of 5-oxoproline to form L-glutamate coupled to the hydrolysis of ATP to ADP and inorganic phosphate. This chain is 5-oxoprolinase subunit A, found in Staphylococcus carnosus (strain TM300).